The following is a 131-amino-acid chain: Small ribosomal subunit protein uS11 (131 aa).

This sequence belongs to the universal ribosomal protein uS11 family. Part of the 30S ribosomal subunit. Interacts with proteins S7 and S18. Binds to IF-3.

Functionally, located on the platform of the 30S subunit, it bridges several disparate RNA helices of the 16S rRNA. Forms part of the Shine-Dalgarno cleft in the 70S ribosome. This Clostridium novyi (strain NT) protein is Small ribosomal subunit protein uS11.